The chain runs to 448 residues: U-box domain-containing protein 30 (448 aa).

The 75-residue stretch at 63–137 (DIPSVFICPI…YTWFSQKYVL (75 aa)) folds into the U-box domain. 2 ARM repeats span residues 179-219 (LMAR…SLDL) and 221-260 (SDSKSGLMQPAKVSLIVDMLNDGSNETKINCARLIRGLVE).

The catalysed reaction is S-ubiquitinyl-[E2 ubiquitin-conjugating enzyme]-L-cysteine + [acceptor protein]-L-lysine = [E2 ubiquitin-conjugating enzyme]-L-cysteine + N(6)-ubiquitinyl-[acceptor protein]-L-lysine.. It participates in protein modification; protein ubiquitination. In terms of biological role, functions as an E3 ubiquitin ligase. This chain is U-box domain-containing protein 30 (PUB30), found in Arabidopsis thaliana (Mouse-ear cress).